The sequence spans 243 residues: Putative C-type lectin protein A7 (243 aa).

A helical membrane pass occupies residues 23–43 (IFFILAATNLMIAAFALGCLA). A C-type lectin domain is found at 116–223 (GQKACYYVPP…CTTSKLCLCG (108 aa)). Cystine bridges form between Cys137/Cys222 and Cys198/Cys214.

The protein resides in the host membrane. The chain is Putative C-type lectin protein A7 (A7) from Alcelaphine herpesvirus 1 (strain C500) (AlHV-1).